The chain runs to 319 residues: DNA-directed RNA polymerases IV and V subunit 3B (319 aa).

At Met1 the chain carries N-acetylmethionine.

This sequence belongs to the archaeal Rpo3/eukaryotic RPB3 RNA polymerase subunit family. As to quaternary structure, component of the RNA polymerase IV and V complexes. Interacts with NRPB11, SHH1, GRP23 and NRPD1.

Its subcellular location is the nucleus. DNA-dependent RNA polymerase catalyzes the transcription of DNA into RNA using the four ribonucleoside triphosphates as substrates. Component of RNA polymerases IV and V which mediate short-interfering RNAs (siRNA) accumulation and subsequent RNA-directed DNA methylation-dependent (RdDM) transcriptional gene silencing (TGS) of endogenous repeated sequences, including transposable elements. This Arabidopsis thaliana (Mouse-ear cress) protein is DNA-directed RNA polymerases IV and V subunit 3B (NRPD3B).